A 624-amino-acid chain; its full sequence is Chaperone protein HtpG (624 aa).

The interval M1–R341 is a; substrate-binding. Positions E342 to K550 are b. Residues V551–K624 form a c region.

The protein belongs to the heat shock protein 90 family. Homodimer.

Its subcellular location is the cytoplasm. Molecular chaperone. Has ATPase activity. The chain is Chaperone protein HtpG from Clostridium acetobutylicum (strain ATCC 824 / DSM 792 / JCM 1419 / IAM 19013 / LMG 5710 / NBRC 13948 / NRRL B-527 / VKM B-1787 / 2291 / W).